Consider the following 160-residue polypeptide: Eosinophil cationic protein (160 aa).

The first 27 residues, 1-27 (MVPKLFTSQICLLLLLGLSGVGGSLHA), serve as a signal peptide directing secretion. Positions 28 to 72 (KPRQFTRAQWFAIQHVSLNPPQCTTAMRVINNYQRRCKDQNTFLR) are required for nearly all of the bactericidal activities; partially involved in LPS-binding. H42 serves as the catalytic Proton acceptor. Disulfide bonds link C50-C110, C64-C123, C82-C138, and C89-C98. 3'-nitrotyrosine is present on Y60. 65-69 (KDQNT) contacts substrate. 4 N-linked (GlcNAc...) asparagine glycosylation sites follow: N86, N92, N111, and N119. The active-site Proton donor is H155.

Belongs to the pancreatic ribonuclease family. In terms of assembly, interacts with bacterial lipopolysaccharide (LPS) and lipoteichoic acid (LTA). In vitro interacts with phospholipid bilayers.

It localises to the secreted. Cytotoxin and helminthotoxin with low-efficiency ribonuclease activity. Possesses a wide variety of biological activities. Exhibits antibacterial activity. In Pongo pygmaeus (Bornean orangutan), this protein is Eosinophil cationic protein (RNASE3).